The chain runs to 268 residues: Sexual development regulator velC (268 aa).

The span at 1-13 (MPHGFDKLLHPEP) shows a compositional bias: basic and acidic residues. 2 disordered regions span residues 1–124 (MPHG…DNFS) and 142–165 (DPDP…NPPH). A compositionally biased stretch (pro residues) spans 14–26 (EPQSPSPPPPPRR). In terms of domain architecture, Velvet spans 28–257 (STQSRYHLHI…ELGFVELKTR (230 aa)). The span at 92–121 (DGNRDREREREHERERERERETDGVARTDD) shows a compositional bias: basic and acidic residues.

This sequence belongs to the velvet family. VelC subfamily. In terms of assembly, interacts with velA and vosA.

Its subcellular location is the nucleus. Functionally, velvet-domain-containing protein that acts as a positive regulator of sexual development. In Penicillium rubens (strain ATCC 28089 / DSM 1075 / NRRL 1951 / Wisconsin 54-1255) (Penicillium chrysogenum), this protein is Sexual development regulator velC.